The following is a 349-amino-acid chain: Small ribosomal subunit biogenesis GTPase RsgA (349 aa).

The span at 1-11 (MSKKKLSKGQQ) shows a compositional bias: basic residues. The disordered stretch occupies residues 1-35 (MSKKKLSKGQQRRVSANHQRRLKHADSKVEWDDSQ). One can recognise a CP-type G domain in the interval 111–272 (YDGLKPIAAN…VIDSPGVREF (162 aa)). Residues 158-161 (NKID) and 212-220 (GQSGVGKSS) contribute to the GTP site. Zn(2+) is bound by residues Cys296, Cys301, His303, and Cys309.

The protein belongs to the TRAFAC class YlqF/YawG GTPase family. RsgA subfamily. As to quaternary structure, monomer. Associates with 30S ribosomal subunit, binds 16S rRNA. Zn(2+) is required as a cofactor.

The protein localises to the cytoplasm. In terms of biological role, one of several proteins that assist in the late maturation steps of the functional core of the 30S ribosomal subunit. Helps release RbfA from mature subunits. May play a role in the assembly of ribosomal proteins into the subunit. Circularly permuted GTPase that catalyzes slow GTP hydrolysis, GTPase activity is stimulated by the 30S ribosomal subunit. The polypeptide is Small ribosomal subunit biogenesis GTPase RsgA (Dickeya dadantii (strain 3937) (Erwinia chrysanthemi (strain 3937))).